The following is a 350-amino-acid chain: UPF0284 protein MJ1598 (350 aa).

It belongs to the UPF0284 family.

The protein is UPF0284 protein MJ1598 of Methanocaldococcus jannaschii (strain ATCC 43067 / DSM 2661 / JAL-1 / JCM 10045 / NBRC 100440) (Methanococcus jannaschii).